We begin with the raw amino-acid sequence, 100 residues long: Large ribosomal subunit protein uL23 (100 aa).

It belongs to the universal ribosomal protein uL23 family. In terms of assembly, part of the 50S ribosomal subunit. Contacts protein L29, and trigger factor when it is bound to the ribosome.

Functionally, one of the early assembly proteins it binds 23S rRNA. One of the proteins that surrounds the polypeptide exit tunnel on the outside of the ribosome. Forms the main docking site for trigger factor binding to the ribosome. This is Large ribosomal subunit protein uL23 from Mycobacteroides abscessus (strain ATCC 19977 / DSM 44196 / CCUG 20993 / CIP 104536 / JCM 13569 / NCTC 13031 / TMC 1543 / L948) (Mycobacterium abscessus).